A 241-amino-acid chain; its full sequence is Probable transcriptional regulatory protein PSHAb0060 (241 aa).

The protein belongs to the TACO1 family.

The protein localises to the cytoplasm. In Pseudoalteromonas translucida (strain TAC 125), this protein is Probable transcriptional regulatory protein PSHAb0060.